The primary structure comprises 129 residues: Transcriptional activator protein (129 aa).

Over residues 1–12 the composition is skewed to low complexity; sequence MRSSSPSQPPSI. Residues 1–21 form a disordered region; it reads MRSSSPSQPPSIKKAHRQAKR. The short motif at 13–28 is the Nuclear localization signal element; the sequence is KKAHRQAKRRAIRRRR. The segment at 33–50 is a zinc-finger region; sequence CGCSIYFHIDCTGHGFTH. Positions 84–114 are disordered; the sequence is IHQNEDIPCTNTVQPQPEESVASPQSLPELP. A compositionally biased stretch (polar residues) spans 92–109; that stretch reads CTNTVQPQPEESVASPQS. The transactivation stretch occupies residues 115-129; sequence SLDDFDDSFWVNLFK.

Belongs to the geminiviridae transcriptional activator protein family. As to quaternary structure, monomer. Homodimer. Homooligomer. Self-interaction correlates with nuclear localization and efficient activation of transcription. Monomers suppress local silencing by interacting with and inactivating host adenosine kinase 2 (ADK2) in the cytoplasm. Interacts with and inhibits host SNF1 kinase. Binds to ssDNA. Phosphorylated.

The protein resides in the host nucleus. It localises to the host cytoplasm. In terms of biological role, strong activator of the late viral genes promoters. Enhances the expression of the capsid protein and nuclear shuttle protein. Acts as a suppressor of RNA-mediated gene silencing, also known as post-transcriptional gene silencing (PTGS), a mechanism of plant viral defense that limits the accumulation of viral RNAs. Suppresses the host RNA silencing by inhibiting adenosine kinase 2 (ADK2), a kinase involved in a general methylation pathway. Also suppresses the host basal defense by interacting with and inhibiting SNF1 kinase, a key regulator of cell metabolism implicated in innate antiviral defense. Determines pathogenicity. This chain is Transcriptional activator protein, found in Abutilon (Upland cotton).